Reading from the N-terminus, the 527-residue chain is Transcription initiation factor TFIID subunit 6b (527 aa).

The Histone-fold domain maps to 3-99; it reads TKESIEVIAQ…NLEPTSGSKS (97 aa). Disordered stretches follow at residues 410-442 and 462-492; these read SPPTSSVWKTNGKLTSPRQSKRKASSDNLTHQP and MRGTTTVPQQSHTDADARHHNSPSTIAPKTS. 2 stretches are compositionally biased toward polar residues: residues 416-427 and 462-473; these read VWKTNGKLTSPR and MRGTTTVPQQSH.

This sequence belongs to the TAF6 family. Component of the TFIID complex. TFIID is composed of TATA binding protein (TBP) and a number of TBP-associated factors (TAFs) whose MWs range from 14-217 kDa. Interacts with TAF5 and TAF9. As to expression, expressed in roots, leaves, inflorescences and siliques.

It localises to the nucleus. TAFs are components of the transcription factor IID (TFIID) complex that is essential for mediating regulation of RNA polymerase transcription. Not redundant with TAF6. The polypeptide is Transcription initiation factor TFIID subunit 6b (TAF6B) (Arabidopsis thaliana (Mouse-ear cress)).